The following is a 176-amino-acid chain: NAD(P)H-quinone oxidoreductase subunit 6, chloroplastic (176 aa).

5 consecutive transmembrane segments (helical) span residues 10–30, 32–52, 61–81, 95–115, and 152–172; these read FLLV…VLLT, PIYS…FYIL, AQLL…VMFM, VGSG…ITII, and FFLP…GAIA.

It belongs to the complex I subunit 6 family. As to quaternary structure, NDH is composed of at least 16 different subunits, 5 of which are encoded in the nucleus.

The protein localises to the plastid. It is found in the chloroplast thylakoid membrane. The enzyme catalyses a plastoquinone + NADH + (n+1) H(+)(in) = a plastoquinol + NAD(+) + n H(+)(out). The catalysed reaction is a plastoquinone + NADPH + (n+1) H(+)(in) = a plastoquinol + NADP(+) + n H(+)(out). Its function is as follows. NDH shuttles electrons from NAD(P)H:plastoquinone, via FMN and iron-sulfur (Fe-S) centers, to quinones in the photosynthetic chain and possibly in a chloroplast respiratory chain. The immediate electron acceptor for the enzyme in this species is believed to be plastoquinone. Couples the redox reaction to proton translocation, and thus conserves the redox energy in a proton gradient. In Manihot esculenta (Cassava), this protein is NAD(P)H-quinone oxidoreductase subunit 6, chloroplastic (ndhG).